A 339-amino-acid chain; its full sequence is Protein-glutamate methylesterase/protein-glutamine glutaminase 2 (339 aa).

The Response regulatory domain occupies 2-119; sequence NIGIVNDLPL…GLSTDASPQA (118 aa). Asp-53 bears the 4-aspartylphosphate mark. A CheB-type methylesterase domain is found at 141–336; that stretch reads PGPAPERGQP…PQLISRITRP (196 aa). Active-site residues include Ser-158, His-185, and Asp-278.

It belongs to the CheB family. Phosphorylated by CheA. Phosphorylation of the N-terminal regulatory domain activates the methylesterase activity.

Its subcellular location is the cytoplasm. The enzyme catalyses [protein]-L-glutamate 5-O-methyl ester + H2O = L-glutamyl-[protein] + methanol + H(+). It catalyses the reaction L-glutaminyl-[protein] + H2O = L-glutamyl-[protein] + NH4(+). Functionally, involved in chemotaxis. Part of a chemotaxis signal transduction system that modulates chemotaxis in response to various stimuli. Catalyzes the demethylation of specific methylglutamate residues introduced into the chemoreceptors (methyl-accepting chemotaxis proteins or MCP) by CheR. Also mediates the irreversible deamidation of specific glutamine residues to glutamic acid. This Burkholderia lata (strain ATCC 17760 / DSM 23089 / LMG 22485 / NCIMB 9086 / R18194 / 383) protein is Protein-glutamate methylesterase/protein-glutamine glutaminase 2.